Reading from the N-terminus, the 906-residue chain is Catenin alpha-1 (906 aa).

T2 bears the N-acetylthreonine mark. Residues 2 to 228 (TAVHAGNINF…PILYTASQAC (227 aa)) form an involved in homodimerization region. K57 is covalently cross-linked (Glycyl lysine isopeptide (Lys-Gly) (interchain with G-Cter in SUMO2)). The tract at residues 97–148 (VRKQGDLMKAAAGEFADDPCSSVKRGNMVRAARALLSAVTRLLILADMADVY) is interaction with JUP and CTNNB1. Phosphoserine is present on residues S264, S268, S295, and S297. The tract at residues 325 to 394 (TRDDRRERIV…AVMDHVSDSF (70 aa)) is interaction with alpha-actinin. T634 is subject to Phosphothreonine. S641 carries the post-translational modification Phosphoserine; by CK2. Residue T645 is modified to Phosphothreonine. Phosphoserine; by CK1 is present on residues S652 and S655. The residue at position 658 (T658) is a Phosphothreonine; by CK1. A Glycyl lysine isopeptide (Lys-Gly) (interchain with G-Cter in SUMO2) cross-link involves residue K797. Phosphoserine is present on S851. Over residues 864–880 (PEKKPLVKREKQDETQT) the composition is skewed to basic and acidic residues. The segment at 864-894 (PEKKPLVKREKQDETQTKIKRASQKKHVNPV) is disordered. Over residues 881-891 (KIKRASQKKHV) the composition is skewed to basic residues.

This sequence belongs to the vinculin/alpha-catenin family. In terms of assembly, monomer and homodimer; the monomer preferentially binds to CTNNB1 and the homodimer to actin. Component of an cadherin:catenin adhesion complex composed of at least of CDH26, beta-catenin/CTNNB1, alpha-catenin/CTNNA1 and p120 catenin/CTNND1. Possible component of an E-cadherin/ catenin adhesion complex together with E-cadherin/CDH1 and beta-catenin/CTNNB1 or gamma-catenin/JUP; the complex is located to adherens junctions. The stable association of CTNNA1 is controversial as CTNNA1 was shown not to bind to F-actin when assembled in the complex. Alternatively, the CTNNA1-containing complex may be linked to F-actin by other proteins such as LIMA1. Binds AFDN and F-actin. Interacts with ARHGAP21. Interacts with AJUBA. Interacts with LIMA1. Interacts with vinculin/VCL. Interacts with TJP2/ZO2 (via N-terminus). Interacts with TJP1/ZO1 (via N-terminus). In terms of processing, sumoylated. Post-translationally, phosphorylation seems to contribute to the strength of cell-cell adhesion rather than to the basic capacity for cell-cell adhesion. As to expression, ubiquitously expressed in normal tissues. In terms of tissue distribution, abundantly expressed in brain and cerebellum, also expressed in the placenta, liver, lung, colon, heart, pancreas, stomach and thymus.

The protein localises to the cytoplasm. Its subcellular location is the cytoskeleton. It localises to the cell junction. The protein resides in the adherens junction. It is found in the cell membrane. The protein localises to the nucleus. Functionally, associates with the cytoplasmic domain of a variety of cadherins. The association of catenins to cadherins produces a complex which is linked to the actin filament network, and which seems to be of primary importance for cadherins cell-adhesion properties. Can associate with both E- and N-cadherins. Originally believed to be a stable component of E-cadherin/catenin adhesion complexes and to mediate the linkage of cadherins to the actin cytoskeleton at adherens junctions. In contrast, cortical actin was found to be much more dynamic than E-cadherin/catenin complexes and CTNNA1 was shown not to bind to F-actin when assembled in the complex suggesting a different linkage between actin and adherens junctions components. The homodimeric form may regulate actin filament assembly and inhibit actin branching by competing with the Arp2/3 complex for binding to actin filaments. Involved in the regulation of WWTR1/TAZ, YAP1 and TGFB1-dependent SMAD2 and SMAD3 nuclear accumulation. May play a crucial role in cell differentiation. The polypeptide is Catenin alpha-1 (Homo sapiens (Human)).